A 520-amino-acid chain; its full sequence is Probable bifunctional tRNA threonylcarbamoyladenosine biosynthesis protein (520 aa).

The tract at residues 1–318 (MKIGPVLGIE…YRADQVLVTW (318 aa)) is kae1. Residues His105, His109, and Tyr126 each contribute to the Fe cation site. L-threonylcarbamoyladenylate contacts are provided by residues 126–130 (YASGA), Asp158, Gly171, Glu175, and Asn251. Residue Asp279 participates in Fe cation binding. The 194-residue stretch at 327–520 (RHPDAYSARG…HEIELRGRYL (194 aa)) folds into the Protein kinase domain. Residues 333–341 (SARGAEAIV) and Lys350 each bind ATP. Asp437 serves as the catalytic Proton acceptor; for kinase activity.

It in the N-terminal section; belongs to the KAE1 / TsaD family. In the C-terminal section; belongs to the protein kinase superfamily. Tyr protein kinase family. BUD32 subfamily. Component of the KEOPS complex that consists of Kae1, Bud32, Cgi121 and Pcc1; the whole complex dimerizes. Requires Fe(2+) as cofactor.

It is found in the cytoplasm. It catalyses the reaction L-seryl-[protein] + ATP = O-phospho-L-seryl-[protein] + ADP + H(+). The enzyme catalyses L-threonyl-[protein] + ATP = O-phospho-L-threonyl-[protein] + ADP + H(+). The catalysed reaction is L-threonylcarbamoyladenylate + adenosine(37) in tRNA = N(6)-L-threonylcarbamoyladenosine(37) in tRNA + AMP + H(+). Functionally, required for the formation of a threonylcarbamoyl group on adenosine at position 37 (t(6)A37) in tRNAs that read codons beginning with adenine. Is a component of the KEOPS complex that is probably involved in the transfer of the threonylcarbamoyl moiety of threonylcarbamoyl-AMP (TC-AMP) to the N6 group of A37. The Kae1 domain likely plays a direct catalytic role in this reaction. The Bud32 domain probably displays kinase activity that regulates Kae1 function. This chain is Probable bifunctional tRNA threonylcarbamoyladenosine biosynthesis protein, found in Methanospirillum hungatei JF-1 (strain ATCC 27890 / DSM 864 / NBRC 100397 / JF-1).